We begin with the raw amino-acid sequence, 252 residues long: Carbohydrate deacetylase (252 aa).

Residues His-59 and His-122 each contribute to the Mg(2+) site.

This sequence belongs to the YdjC deacetylase family. Homodimer. Requires Mg(2+) as cofactor.

In terms of biological role, probably catalyzes the deacetylation of acetylated carbohydrates an important step in the degradation of oligosaccharides. This is Carbohydrate deacetylase from Vibrio cholerae serotype O1 (strain ATCC 39315 / El Tor Inaba N16961).